Consider the following 96-residue polypeptide: Early E1A 11 kDa protein (96 aa).

Disordered stretches follow at residues 1-29 and 72-96; these read MNSR…QDQQ and LAQG…EESD. Residues 75–96 show a composition bias toward acidic residues; it reads GEEEEEEEDGAEDIEENGEESD.

This chain is Early E1A 11 kDa protein, found in Murine adenovirus A serotype 1 (MAdV-1).